The following is a 132-amino-acid chain: Small ribosomal subunit protein uS11 (132 aa).

The disordered stretch occupies residues 1 to 24 (MAAQKQAARKPRRRDRKSVPVGQA). Residues 7-16 (AARKPRRRDR) are compositionally biased toward basic residues.

Belongs to the universal ribosomal protein uS11 family. As to quaternary structure, part of the 30S ribosomal subunit. Interacts with proteins S7 and S18. Binds to IF-3.

Its function is as follows. Located on the platform of the 30S subunit, it bridges several disparate RNA helices of the 16S rRNA. Forms part of the Shine-Dalgarno cleft in the 70S ribosome. This chain is Small ribosomal subunit protein uS11, found in Bifidobacterium adolescentis (strain ATCC 15703 / DSM 20083 / NCTC 11814 / E194a).